The sequence spans 1661 residues: Mediator of RNA polymerase II transcription subunit 12 (1661 aa).

3 disordered regions span residues 1–22 (MSKT…VSNS), 524–550 (KDRR…ITGK), and 1501–1527 (DDMT…PDGT). Composition is skewed to polar residues over residues 7-22 (RNSL…VSNS), 539-548 (DTKNNYNSIT), and 1505-1527 (TDTS…PDGT).

It belongs to the Mediator complex subunit 12 family. Component of the SRB8-11 complex, which itself associates with the Mediator complex.

It is found in the nucleus. Functionally, component of the SRB8-11 complex. The SRB8-11 complex is a regulatory module of the Mediator complex which is itself involved in regulation of basal and activated RNA polymerase II-dependent transcription. The SRB8-11 complex may be involved in the transcriptional repression of a subset of genes regulated by Mediator. It may inhibit the association of the Mediator complex with RNA polymerase II to form the holoenzyme complex. This is Mediator of RNA polymerase II transcription subunit 12 (SRB8) from Debaryomyces hansenii (strain ATCC 36239 / CBS 767 / BCRC 21394 / JCM 1990 / NBRC 0083 / IGC 2968) (Yeast).